We begin with the raw amino-acid sequence, 329 residues long: Phosphoenolpyruvate transferase (329 aa).

Asp61 is a binding site for 7,8-didemethyl-8-hydroxy-5-deazariboflavin.

This sequence belongs to the CofD family. In terms of assembly, homodimer. The cofactor is Mg(2+).

The enzyme catalyses enolpyruvoyl-2-diphospho-5'-guanosine + 7,8-didemethyl-8-hydroxy-5-deazariboflavin = dehydro coenzyme F420-0 + GMP + H(+). Its pathway is cofactor biosynthesis; coenzyme F420 biosynthesis. Its function is as follows. Catalyzes the transfer of the phosphoenolpyruvate moiety from enoylpyruvoyl-2-diphospho-5'-guanosine (EPPG) to 7,8-didemethyl-8-hydroxy-5-deazariboflavin (FO) with the formation of dehydro coenzyme F420-0 and GMP. In Mycobacterium ulcerans (strain Agy99), this protein is Phosphoenolpyruvate transferase.